The following is a 128-amino-acid chain: Azurin (128 aa).

A Plastocyanin-like domain is found at 1–128; the sequence is AECKVTVDST…SMMKGTVTVK (128 aa). An intrachain disulfide couples Cys-3 to Cys-26. Cu cation-binding residues include His-46, Cys-112, His-117, and Met-121.

The protein localises to the periplasm. Transfers electrons from cytochrome c551 to cytochrome oxidase. In Pseudomonas fluorescens biotype A, this protein is Azurin.